The sequence spans 396 residues: Serine/threonine-protein kinase 32A (396 aa).

A lipid anchor (N-myristoyl glycine) is attached at Gly2. Positions 23-281 (FEILRAIGKG…LSDVQNFPYM (259 aa)) constitute a Protein kinase domain. Residues 29–37 (IGKGSFGKV) and Lys52 each bind ATP. Asp146 functions as the Proton acceptor in the catalytic mechanism. The disordered stretch occupies residues 373 to 396 (KRQPNLALEQTKDPQGEDGQNNNL).

It belongs to the protein kinase superfamily. Ser/Thr protein kinase family. It depends on Mg(2+) as a cofactor.

Its subcellular location is the cell membrane. The enzyme catalyses L-seryl-[protein] + ATP = O-phospho-L-seryl-[protein] + ADP + H(+). The catalysed reaction is L-threonyl-[protein] + ATP = O-phospho-L-threonyl-[protein] + ADP + H(+). This Homo sapiens (Human) protein is Serine/threonine-protein kinase 32A (STK32A).